A 335-amino-acid polypeptide reads, in one-letter code: Protein CBP3, mitochondrial (335 aa).

The N-terminal 38 residues, 1–38, are a transit peptide targeting the mitochondrion; it reads MMSVNRFTSGRLPVFLRKSPFYYSRAYLHQTCVFKQNK. The helical transmembrane segment at 152-169 threads the bilayer; the sequence is TFSQWFQITVLHEWILFV.

It belongs to the CBP3 family.

The protein localises to the mitochondrion membrane. Functionally, chaperone required for the assembly of ubiquinol-cytochrome c reductase of the mitochondrial respiratory chain. The sequence is that of Protein CBP3, mitochondrial (CBP3) from Saccharomyces cerevisiae (strain ATCC 204508 / S288c) (Baker's yeast).